The chain runs to 164 residues: UPF0303 protein RHECIAT_CH0003058 (164 aa).

Belongs to the UPF0303 family.

The chain is UPF0303 protein RHECIAT_CH0003058 from Rhizobium etli (strain CIAT 652).